The chain runs to 100 residues: MTKVTREEVEHIANLARLQISPEETEEMANTLESILDFAKQNDSADTEGIEPTYHVLDLQNVLRDDKAIEGIPQELALKNAKETEDGQFKVPSIMNGEDA.

Belongs to the GatC family. In terms of assembly, heterotrimer of A, B and C subunits.

It catalyses the reaction L-glutamyl-tRNA(Gln) + L-glutamine + ATP + H2O = L-glutaminyl-tRNA(Gln) + L-glutamate + ADP + phosphate + H(+). The catalysed reaction is L-aspartyl-tRNA(Asn) + L-glutamine + ATP + H2O = L-asparaginyl-tRNA(Asn) + L-glutamate + ADP + phosphate + 2 H(+). In terms of biological role, allows the formation of correctly charged Asn-tRNA(Asn) or Gln-tRNA(Gln) through the transamidation of misacylated Asp-tRNA(Asn) or Glu-tRNA(Gln) in organisms which lack either or both of asparaginyl-tRNA or glutaminyl-tRNA synthetases. The reaction takes place in the presence of glutamine and ATP through an activated phospho-Asp-tRNA(Asn) or phospho-Glu-tRNA(Gln). The chain is Aspartyl/glutamyl-tRNA(Asn/Gln) amidotransferase subunit C from Staphylococcus epidermidis (strain ATCC 35984 / DSM 28319 / BCRC 17069 / CCUG 31568 / BM 3577 / RP62A).